The primary structure comprises 208 residues: Na(+)-translocating NADH-quinone reductase subunit D (208 aa).

The next 5 helical transmembrane spans lie at 42–62, 72–92, 103–123, 131–151, and 178–198; these read FVMA…VSLI, IIVQ…ILKA, VFVG…AFAM, FVDG…VAFF, and NGLF…IWGL.

This sequence belongs to the NqrDE/RnfAE family. As to quaternary structure, composed of six subunits; NqrA, NqrB, NqrC, NqrD, NqrE and NqrF.

Its subcellular location is the cell inner membrane. It carries out the reaction a ubiquinone + n Na(+)(in) + NADH + H(+) = a ubiquinol + n Na(+)(out) + NAD(+). NQR complex catalyzes the reduction of ubiquinone-1 to ubiquinol by two successive reactions, coupled with the transport of Na(+) ions from the cytoplasm to the periplasm. NqrA to NqrE are probably involved in the second step, the conversion of ubisemiquinone to ubiquinol. This Haemophilus influenzae (strain 86-028NP) protein is Na(+)-translocating NADH-quinone reductase subunit D.